Here is a 347-residue protein sequence, read N- to C-terminus: Actin-like protein MamK (347 aa).

Residues lysine 9, 20–21 (TS), and aspartate 76 contribute to the ATP site. Glutamate 143 is a Mg(2+) binding site. ATP contacts are provided by residues 164-166 (AGT), 218-222 (KEQFS), and glycine 289.

Belongs to the FtsA/MreB family. MamK subfamily. Forms cytoplasmic filaments. Filaments are parallel (polar) and double-helical. MamK subunits from each of the two strands are juxtaposed, each monomer binds ADP. At cell poles and septa interacts with methyl-accepting chemotaxis protein Amb0944 (MCP10). Forms filaments with MamK-like protein.

It is found in the cytoplasm. It localises to the cytoskeleton. The protein resides in the magnetosome membrane. It catalyses the reaction ATP + H2O = ADP + phosphate + H(+). Its activity is regulated as follows. Filament turnover is promoted by MamJ and/or LimJ which have overlapping function; at least one other protein is required for turnover. MamK filament dynamics are probably required for the assembly or maintenance of the magnetosome chain. Protein with ATPase activity which forms dynamic cytoplasmic filaments (probably with paralog MamK-like) that organize magnetosomes into long chains running parallel to the long axis of the cell. Turnover of MamK filaments is probably promoted by MamK-like, which provides a monomer pool. Forms twisted filaments in the presence of ATP or GTP. Serves to close gaps between magnetosomes in the chain. Interaction with MCP10 is involved in controlling the response to magnetic fields, possibly by controlling flagellar rotation. Expression in E.coli yields a filament in the cell's longitudinal axis; the protein nucleates at several sites and one extremity of the filament is located at the cell pole. This Paramagnetospirillum magneticum (strain ATCC 700264 / AMB-1) (Magnetospirillum magneticum) protein is Actin-like protein MamK (mamK).